Here is a 427-residue protein sequence, read N- to C-terminus: MIKIIGAGLAGSEAAYYLANKGYKVKLYEMRPKKNTPAHVTKNFAELVCSNSFRSNDPLNAVGLLKVEMTHFNSLILEAANIHKVPAGSSLAVDRNLFSEYVTEKIKSHENIEVIHEEVTSLDPNEYTIIAAGPLASDLLSKQIQDHLHLESLNFFDAVAPIIDAKSINMDIAYLKSRYDKDEAAYINCPMNKQEYLEFYKALMTAESVAPKDFENNVFEGCMPVEDMGKRGIDTLRFGPLKPVGLTKPNGEKPYAVVQLRQDDVNKTMYNMVGFQTHMKWGDQKRVIQMIPGLENAEILRYGVIHKNTYLESPKHLNNAFQVRDIPKWFFAGQISGVEGYIESAASGLNVAINLHNLLTKGEIRPLPVDTMMGAMARYISNYHQYFVPMNANFGLFDQIEAHKTVRKQMYYDRSMHALKEYIEGGI.

6 to 11 (GAGLAG) contacts FAD.

Belongs to the MnmG family. TrmFO subfamily. FAD is required as a cofactor.

It is found in the cytoplasm. It carries out the reaction uridine(54) in tRNA + (6R)-5,10-methylene-5,6,7,8-tetrahydrofolate + NADH + H(+) = 5-methyluridine(54) in tRNA + (6S)-5,6,7,8-tetrahydrofolate + NAD(+). The catalysed reaction is uridine(54) in tRNA + (6R)-5,10-methylene-5,6,7,8-tetrahydrofolate + NADPH + H(+) = 5-methyluridine(54) in tRNA + (6S)-5,6,7,8-tetrahydrofolate + NADP(+). In terms of biological role, catalyzes the folate-dependent formation of 5-methyl-uridine at position 54 (M-5-U54) in all tRNAs. This Acholeplasma laidlawii (strain PG-8A) protein is Methylenetetrahydrofolate--tRNA-(uracil-5-)-methyltransferase TrmFO.